Consider the following 405-residue polypeptide: MQYSEIMVRYGELSTKGKNRQAFIGRLNGNVTRALHEFPNLTIRPKRDRMHIELNGEPSDQVMARLSQVFGIQNFSPSIAVEKDMDKVHAVALQLMNETAPKGISYKVNTRRSDHDFALDTNAMNLDLGDYLTDKRPDLVVKMHQPDMILRVEVRREAIYLSTKTIQGAGGLPVGTAGKAALMLSGGIDSPVAGYYALKRGVDIEMVHFFSPPYTSQQALNKAKQLTAKLTPYVGRIYFIEVPFTEIQEEIKAKVPEGYLMTVQRRLMLRLTEAIAQQRGDLAIFNGESVGQVASQTLESMAAINDVTTMPIIRPVATMDKNEIIAEAEKIDTYDLSIMPFEDCCTIFAPPSPKTKPKTDRARYYESKIDVAGLMDRALAGVKIQEIKSSDQFMNQDQDVIAELL.

Residues 60 to 165 enclose the THUMP domain; sequence DQVMARLSQV…REAIYLSTKT (106 aa). Residues 183–184, 208–209, arginine 265, glycine 287, and glutamine 296 contribute to the ATP site; these read ML and HF.

This sequence belongs to the ThiI family.

Its subcellular location is the cytoplasm. The enzyme catalyses [ThiI sulfur-carrier protein]-S-sulfanyl-L-cysteine + a uridine in tRNA + 2 reduced [2Fe-2S]-[ferredoxin] + ATP + H(+) = [ThiI sulfur-carrier protein]-L-cysteine + a 4-thiouridine in tRNA + 2 oxidized [2Fe-2S]-[ferredoxin] + AMP + diphosphate. The catalysed reaction is [ThiS sulfur-carrier protein]-C-terminal Gly-Gly-AMP + S-sulfanyl-L-cysteinyl-[cysteine desulfurase] + AH2 = [ThiS sulfur-carrier protein]-C-terminal-Gly-aminoethanethioate + L-cysteinyl-[cysteine desulfurase] + A + AMP + 2 H(+). The protein operates within cofactor biosynthesis; thiamine diphosphate biosynthesis. Functionally, catalyzes the ATP-dependent transfer of a sulfur to tRNA to produce 4-thiouridine in position 8 of tRNAs, which functions as a near-UV photosensor. Also catalyzes the transfer of sulfur to the sulfur carrier protein ThiS, forming ThiS-thiocarboxylate. This is a step in the synthesis of thiazole, in the thiamine biosynthesis pathway. The sulfur is donated as persulfide by IscS. The polypeptide is Probable tRNA sulfurtransferase (Lacticaseibacillus paracasei (strain ATCC 334 / BCRC 17002 / CCUG 31169 / CIP 107868 / KCTC 3260 / NRRL B-441) (Lactobacillus paracasei)).